Consider the following 243-residue polypeptide: MSYRVKRMLMLLVTGLFLSLSTFAASASAQTGGSFYEPFNNYNTGLWQKADGYSNGNMFNCTWRANNVSMTSLGEMRLSLTSPSYNKFDCGENRSVQTYGYGLYEVNMKPAKNVGIVSSFFTYTGPTDGTPWDEIDIEFLGKDTTKVQFNYYTNGVGNHEKIVNLGFDAANSYHTYAFDWQPNSIKWYVDGQLKHTATTQIPQTPGKIMMNLWNGAGVDEWLGSYNGVTPLSRSLHWVRYTKR.

The N-terminal stretch at 1–27 is a signal peptide; the sequence is MSYRVKRMLMLLVTGLFLSLSTFAASA. One can recognise a GH16 domain in the interval 29-243; that stretch reads AQTGGSFYEP…SLHWVRYTKR (215 aa). Cysteine 61 and cysteine 90 are disulfide-bonded. The Nucleophile role is filled by glutamate 134. The active-site Proton donor is glutamate 138.

This sequence belongs to the glycosyl hydrolase 16 family.

The enzyme catalyses Hydrolysis of (1-&gt;4)-beta-D-glucosidic linkages in beta-D-glucans containing (1-&gt;3)- and (1-&gt;4)-bonds.. This Bacillus licheniformis protein is Beta-glucanase (bg1).